The sequence spans 196 residues: RNA-free ribonuclease P (196 aa).

It belongs to the HARP family.

The enzyme catalyses Endonucleolytic cleavage of RNA, removing 5'-extranucleotides from tRNA precursor.. In terms of biological role, RNA-free RNase P that catalyzes the removal of the 5'-leader sequence from pre-tRNA to produce the mature 5'-terminus. The sequence is that of RNA-free ribonuclease P from Thermodesulfovibrio yellowstonii (strain ATCC 51303 / DSM 11347 / YP87).